The sequence spans 647 residues: Threonine--tRNA ligase (647 aa).

The 63-residue stretch at 1–63 (MEVRVEGQMV…PAGCTGIEPV (63 aa)) folds into the TGS domain. A catalytic region spans residues 244–535 (DHRKLGRELS…LVENFAGALP (292 aa)). Residues cysteine 336, histidine 387, and histidine 512 each contribute to the Zn(2+) site.

The protein belongs to the class-II aminoacyl-tRNA synthetase family. Homodimer. Requires Zn(2+) as cofactor.

It is found in the cytoplasm. The catalysed reaction is tRNA(Thr) + L-threonine + ATP = L-threonyl-tRNA(Thr) + AMP + diphosphate + H(+). Its function is as follows. Catalyzes the attachment of threonine to tRNA(Thr) in a two-step reaction: L-threonine is first activated by ATP to form Thr-AMP and then transferred to the acceptor end of tRNA(Thr). Also edits incorrectly charged L-seryl-tRNA(Thr). The chain is Threonine--tRNA ligase from Desulfovibrio desulfuricans (strain ATCC 27774 / DSM 6949 / MB).